The primary structure comprises 1044 residues: Diacylglycerol lipase-alpha (1044 aa).

Residues Met-1–Ala-22 are Cytoplasmic-facing. Residues Ile-23 to Leu-43 traverse the membrane as a helical segment. The Extracellular portion of the chain corresponds to Val-44–Arg-60. A helical membrane pass occupies residues Gly-61–Met-81. Over Arg-82–Arg-101 the chain is Cytoplasmic. Residues Leu-102–Tyr-122 form a helical membrane-spanning segment. The Extracellular portion of the chain corresponds to Tyr-123–Leu-136. The N-linked (GlcNAc...) asparagine glycan is linked to Asn-133. A helical transmembrane segment spans residues Gly-137–Phe-157. Residues Asp-158–Arg-1044 are Cytoplasmic-facing. Catalysis depends on charge relay system residues Ser-472 and Asp-524. Phosphoserine occurs at positions 728, 730, 733, 744, 784, 786, 808, 810, 835, 849, and 954. The interval Leu-848–Leu-897 is disordered. The segment at Gln-1013–Arg-1044 is disordered. Residue Thr-1025 is modified to Phosphothreonine.

It belongs to the AB hydrolase superfamily. Lipase family. As to quaternary structure, interacts (via C-terminal) with CAMK2A; leading to the phosphorylation and inhibition of DAGLA enzymatic activity. Interacts (via PPXXF motif) with HOMER1 and HOMER2; this interaction is required for DAGLA membrane localization. Ca(2+) is required as a cofactor. Post-translationally, phosphorylated at Ser-784 and Ser-810 by CAMK2A; phosphorylation by CAMK2A inhibits diacylglycerol lipase activity. Highly expressed by principal cells in the hippocampus. In embryonic brains, it is present in axonal tracts, while in adults it localizes to dendritic fields, correlating with the developmental change in requirement for 2-AG synthesis from the pre- to the postsynaptic compartment. Concentrated in heads of dendritic spines throughout the hippocampal formation. Highly compartmentalized into a wide perisynaptic annulus around the postsynaptic density of axospinous contacts but not intrasynaptically (at protein level).

It localises to the cell membrane. The protein resides in the cell projection. Its subcellular location is the dendritic spine membrane. It is found in the postsynaptic density membrane. The protein localises to the early endosome membrane. It carries out the reaction a 1,2-diacyl-sn-glycerol + H2O = a 2-acylglycerol + a fatty acid + H(+). It catalyses the reaction 1-octadecanoyl-2-(5Z,8Z,11Z,14Z-eicosatetraenoyl)-sn-glycerol + H2O = 2-(5Z,8Z,11Z,14Z-eicosatetraenoyl)-glycerol + octadecanoate + H(+). The enzyme catalyses 1,2-di-(9Z-octadecenoyl)-sn-glycerol + H2O = 2-(9Z-octadecenoyl)-glycerol + (9Z)-octadecenoate + H(+). The catalysed reaction is 1-(9Z-octadecenoyl)-2-(5Z,8Z,11Z,14Z-eicosatetraenoyl)-sn-glycerol + H2O = 2-(5Z,8Z,11Z,14Z-eicosatetraenoyl)-glycerol + (9Z)-octadecenoate + H(+). It carries out the reaction 1-(9Z-octadecenoyl)-2-octadecanoyl-sn-glycerol + H2O = 2-octadecanoylglycerol + (9Z)-octadecenoate + H(+). It catalyses the reaction 1-(9Z-octadecenoyl)-2-(9Z,12Z-octadecadienoyl)-sn-glycerol + H2O = 2-(9Z,12Z-octadecadienoyl)-glycerol + (9Z)-octadecenoate + H(+). The enzyme catalyses 1-(9Z-octadecenoyl)-2-O-(5Z,8Z,11Z,14Z-eicosatetraenyl)-sn-glycerol + H2O = 2-O-(5Z,8Z,11Z,14Z)-eicosatetraenylglycerol + (9Z)-octadecenoate + H(+). Inhibited by 1,2,3-triazole urea covalent inhibitor KT172, DH376 and DO34. Inhibited by p-hydroxy-mercuri-benzoate and HgCl(2), but not to PMSF. Also inhibited by RHC80267. Diacylglycerol lipase activity is inhibited by the phosphorylation of Ser-784 and Ser-810 by CAMK2A. Functionally, serine hydrolase that hydrolyzes arachidonic acid-esterified diacylglycerols (DAGs) to produce the principal endocannabinoid (eCB), 2-arachidonoylglycerol (2-AG). Preferentially hydrolyzes sn-1 fatty acids from diacylglycerols (DAG) that contain arachidonic acid (AA) esterified at the sn-2 position to biosynthesize 2-AG. Has negligible activity against other lipids including monoacylglycerols and phospholipids. Plays a key role in regulating 2-AG signaling in the central nervous system (CNS). Controls the activity of 2-AG as a retrograde messenger at neuronal synapses. Supports axonal growth during development and adult neurogenesis. Plays a role for eCB signaling in the physiological regulation of anxiety and depressive behaviors. Also regulates neuroinflammatory responses in the brain, in particular, LPS-induced microglial activation. This chain is Diacylglycerol lipase-alpha (Dagla), found in Mus musculus (Mouse).